A 280-amino-acid polypeptide reads, in one-letter code: Pyrethroid hydrolase (280 aa).

Residues Asp202 and His230 each act as charge relay system in the active site. Residues 254 to 280 form a disordered region; sequence YRQTATKAGPDRPAGADGGRADRADLP.

The protein belongs to the AB hydrolase superfamily. Monomer.

The catalysed reaction is (-)-trans-permethrin + H2O = (3-phenoxyphenyl)methanol + (1S,3R)-3-(2,2-dichlorovinyl)-2,2-dimethylcyclopropanecarboxylate + H(+). Its function is as follows. Catalyzes the hydrolysis of pyrethroids pesticides. Catalyzes the hydrolysis of cypermethrin to equimolar amounts of cyano-3-phenoxybenzyl alcohol and 2,2-dimethyl-3-(2,2-dichlorovinyl)-cyclopropanecarboxylic acid. Hydrolyzes cis-permethrin at approximately equal rate to trans-permethrin. This Sphingobium wenxiniae (strain DSM 21828 / CGMCC 1.7748 / JZ-1) protein is Pyrethroid hydrolase (pytH).